Reading from the N-terminus, the 328-residue chain is Serine protease 48 (328 aa).

The N-terminal stretch at 1–20 is a signal peptide; sequence MGPAGCAFTLLLLLGISVCG. The Peptidase S1 domain occupies 28 to 267; that stretch reads VVGGQDAAAG…YQKWINATIS (240 aa). Cysteine 53 and cysteine 69 are oxidised to a cystine. Catalysis depends on charge relay system residues histidine 68 and aspartate 114. Intrachain disulfides connect cysteine 148-cysteine 226, cysteine 181-cysteine 205, and cysteine 216-cysteine 244. Residue serine 220 is the Charge relay system of the active site. The N-linked (GlcNAc...) asparagine glycan is linked to asparagine 263.

This sequence belongs to the peptidase S1 family.

It is found in the secreted. This Homo sapiens (Human) protein is Serine protease 48 (PRSS48).